Reading from the N-terminus, the 207-residue chain is Thymidylate kinase (207 aa).

9 to 16 (GGEGCGKS) lines the ATP pocket.

It belongs to the thymidylate kinase family.

It catalyses the reaction dTMP + ATP = dTDP + ADP. Phosphorylation of dTMP to form dTDP in both de novo and salvage pathways of dTTP synthesis. This is Thymidylate kinase from Dehalococcoides mccartyi (strain ATCC BAA-2266 / KCTC 15142 / 195) (Dehalococcoides ethenogenes (strain 195)).